Reading from the N-terminus, the 1320-residue chain is Myopalladin (1320 aa).

An interaction with CARP region spans residues 1–522; the sequence is MQDDSIEAST…FTCTASNKYG (522 aa). 3 disordered regions span residues 19–68, 84–145, and 165–271; these read SYLA…AFLS, NYDP…SETQ, and FKSH…PPRF. 2 stretches are compositionally biased toward basic and acidic residues: residues 23–35 and 87–106; these read ETRH…RSRA and PLEK…DQMK. A Phosphoserine modification is found at serine 101. Positions 107-130 are enriched in polar residues; sequence HSPNLSFEPNFCQDNPRSPTSSKE. Phosphoserine is present on serine 131. Residues 168 to 182 are compositionally biased toward basic residues; the sequence is HSSKRIRPRACKNHK. Positions 186–201 are enriched in polar residues; the sequence is ESQNKVMQENSSSFSD. Residues 218-239 are compositionally biased toward basic and acidic residues; it reads DTRDNEVNHALEQQEAKRREAE. A coiled-coil region spans residues 219–248; the sequence is TRDNEVNHALEQQEAKRREAEQAASEAAGG. Over residues 240-258 the composition is skewed to low complexity; the sequence is QAASEAAGGDTTPGSSPSS. At threonine 251 the chain carries Phosphothreonine. Ig-like domains follow at residues 269 to 359 and 435 to 531; these read PRFT…IYIE and PVFT…AQLH. Cystine bridges form between cysteine 290–cysteine 341 and cysteine 456–cysteine 515. The tract at residues 554-655 is disordered; that stretch reads AAIEPQPSPP…VKEPPPVLAK (102 aa). The span at 559–575 shows a compositional bias: pro residues; that stretch reads QPSPPHSEPPSVEQPPK. At serine 644 the chain carries Phosphoserine. The interval 649-677 is interaction with NEB; that stretch reads PPPVLAKPKLDSTQLQQLHNQVLLEQHQL. Residue serine 759 is modified to Phosphoserine. The segment at 763-805 is disordered; sequence LLVSHPSVQTKSPGGLSIQNEPLPPGPTEPTPPPFTFSIPSGN. Over residues 768-782 the composition is skewed to polar residues; the sequence is PSVQTKSPGGLSIQN. Residues 784 to 797 are compositionally biased toward pro residues; the sequence is PLPPGPTEPTPPPF. 5 positions are modified to phosphoserine: serine 813, serine 818, serine 867, serine 907, and serine 928. Residues 844 to 876 form a disordered region; that stretch reads NAMGLPRSAPSMPSQGLAKKNTKSPQPVNDDNI. 3 consecutive Ig-like domains span residues 945–1029, 1073–1162, and 1172–1262; these read PIFD…GRIS, PHFL…LELS, and PVIL…ARLD. An interaction with ACTN region spans residues 945–1320; that stretch reads PIFDKRLKHF…SRSVVESDEL (376 aa). The cysteines at positions 1094 and 1146 are disulfide-linked.

The protein belongs to the myotilin/palladin family. Interacts with TTN/titin, NEB, NEBL, ACTN2 and CARP. Expressed in adult skeletal muscle and fetal heart.

The protein localises to the cytoplasm. The protein resides in the nucleus. It localises to the myofibril. Its subcellular location is the sarcomere. It is found in the z line. Component of the sarcomere that tethers together nebulin (skeletal muscle) and nebulette (cardiac muscle) to alpha-actinin, at the Z lines. This Homo sapiens (Human) protein is Myopalladin (MYPN).